The chain runs to 263 residues: Syntaxin-73 (263 aa).

The Cytoplasmic portion of the chain corresponds to 1 to 240 (MGVIDLITRV…TVTKLRSSRN (240 aa)). Ser-12 is subject to Phosphoserine. A t-SNARE coiled-coil homology domain is found at 169-231 (YEMKRIKQAR…KSTNVRLKDT (63 aa)). Residues 241–261 (FCIDIILLCILLGIAAFIYNS) traverse the membrane as a helical; Anchor for type IV membrane protein segment. At 262–263 (VK) the chain is on the vesicular side.

The protein belongs to the syntaxin family. In terms of assembly, part of the t-SNARE complex. In terms of tissue distribution, expressed in root, leaf, stem, flower and silique.

It localises to the membrane. Its function is as follows. Vesicle trafficking protein that functions in the secretory pathway. This chain is Syntaxin-73 (SYP73), found in Arabidopsis thaliana (Mouse-ear cress).